Consider the following 176-residue polypeptide: Peptide deformylase (176 aa).

Residues Cys92 and His134 each contribute to the Fe cation site. The active site involves Glu135. Residue His138 participates in Fe cation binding.

The protein belongs to the polypeptide deformylase family. Fe(2+) is required as a cofactor.

It carries out the reaction N-terminal N-formyl-L-methionyl-[peptide] + H2O = N-terminal L-methionyl-[peptide] + formate. Functionally, removes the formyl group from the N-terminal Met of newly synthesized proteins. Requires at least a dipeptide for an efficient rate of reaction. N-terminal L-methionine is a prerequisite for activity but the enzyme has broad specificity at other positions. The sequence is that of Peptide deformylase from Acinetobacter baumannii (strain SDF).